Reading from the N-terminus, the 272-residue chain is Phosphonates import ATP-binding protein PhnC (272 aa).

One can recognise an ABC transporter domain in the interval 2–244; the sequence is LVFDKVNRVY…IQKRLYEIEH (243 aa). Residue 35 to 42 coordinates ATP; it reads GPSGAGKS.

It belongs to the ABC transporter superfamily. Phosphonates importer (TC 3.A.1.9.1) family. In terms of assembly, the complex is composed of two ATP-binding proteins (PhnC), two transmembrane proteins (PhnE) and a solute-binding protein (PhnD).

It is found in the cell inner membrane. It carries out the reaction phosphonate(out) + ATP + H2O = phosphonate(in) + ADP + phosphate + H(+). Functionally, part of the ABC transporter complex PhnCDE involved in phosphonates import. Responsible for energy coupling to the transport system. The sequence is that of Phosphonates import ATP-binding protein PhnC from Hydrogenovibrio crunogenus (strain DSM 25203 / XCL-2) (Thiomicrospira crunogena).